We begin with the raw amino-acid sequence, 483 residues long: Cobyric acid synthase (483 aa).

One can recognise a GATase cobBQ-type domain in the interval 252-439 (KLNVVVPVLT…LHGFFDEAEA (188 aa)). C333 serves as the catalytic Nucleophile. Residue H431 is part of the active site.

This sequence belongs to the CobB/CobQ family. CobQ subfamily.

It functions in the pathway cofactor biosynthesis; adenosylcobalamin biosynthesis. Its function is as follows. Catalyzes amidations at positions B, D, E, and G on adenosylcobyrinic A,C-diamide. NH(2) groups are provided by glutamine, and one molecule of ATP is hydrogenolyzed for each amidation. This Vibrio parahaemolyticus serotype O3:K6 (strain RIMD 2210633) protein is Cobyric acid synthase.